The following is a 1345-amino-acid chain: MENWQATEILPKIEAPLNIFNDIKTYTAEQLFDNLRIYFGDDPSRYNISFEALLGIYCNKIEWINFFTTPIAVAANVIRFNDVSRMTLGKVLFFIQLPRVATGNDVTAPKETTIMVAKHSEKHPINISFDLSAACLEHLENTFKNTVIDQILNINALHTVLRSLKNSADSLERGLIHAFMQTLLRKSPPQFIVLTMNENKVHNKQALSRVQRSNMFQSLKNRLLTSLFFLNRNNNSSYIYRILNDMMESVTESILNDTNNYTSKENIPLDGVLLGPIGSIQKLTNILSQYISTQVVSAPISYGHFIMGKENAVTAIAYRAIMADFTQFTVNAGTEQQDTNNKSEIFDKSRAYADLKLNTLKLGDKLVAFDHLHKVYKNTDVNDPLEQSLQLTFFFPLGIYIPTETGFSTMETRVKLNDTMENNLPTSVFFHNKDQVVQRIDFADILPSVCHPIVHDSTIVERLMKNEPLPTGHRFSQLCQLKITRENPTRILQTLYNLYESRQEVPKNTNVLKNELNVEDFYKPDNPTLPTERHPFFDLTYIQKNRATEVLCTPRIMIGNMPLPLAPISFHEARTNQMLEHAKTNSHNYDFTLKIVTESLTSGSYPELAYVIEILVHGNKHAFMILKQVISQCISYWFNMKHILLFCNSFEMIMLISNHMGDELIPGAAFAHYRNLVSLIRLVKRTISISNINEQLCGEPLVNFANALFDGRLFCPFVHTMPRNDTNAKITADDTPLTQNTVRVRNYEISDVQRMNLIDSSVVFTDNDRPSNENTILSKIFYFCVLPALSNNKACGAGVNVKELVLDLFYTEPFICPDDCFQENPISSDVLMSLIREAMGPGYTVANTSSIAKQLFKSLIYINENTKILEVEVSLDPAQRHGNSVHFQSLQHILYNGLCLISPITTLRRYYQPIPFHRFFSDPGICGTMNADIQVFLNTFPHYQRNDGGFPLPPPLALEFYNWQRTPFSVYSAFCPNSLLSIMTLAAMHSKLSPVAIAIQSKSKIHPGFAATLVRTDNFDVECLLYSSRAATSIILDDPTVTAEAKDIVTTYNFTQHLSFVDMGLGFSSTTATANLKRIKSDMGSKIQNLFSAFPIHAFTNTDINTWIRHHVGIEKPNPSEGEALNIITFGGINKNPPSILLHGQQAICEVILTPVTTNINFFKLPHNPRGRESCMMGTDPHNEEAARKALYDHTQTDSDTFAATTNPWASLPGSLGDILYNTAHREQLCYNPKTYSPNAQFFTESDILKTNKMMYKVINEYCMKSNSCLNSDSEIQYSCSEGTDSFVSRPCQFLQNALPLHCSSNQALLESRSKTGNTQISETHYCNYAIGETIPLQLIIESSI.

This sequence belongs to the herpesviridae major capsid protein family. As to quaternary structure, homomultimer. Makes the hexons and eleven out of twelve pentons. Interacts with triplex proteins 1/TRX1 and 2/TRX2; adjacent capsomers are linked together in groups of three by triplexes, heterotrimeric complexes composed of one molecule of TRX1 and two molecules of TRX2. Interacts with scaffold protein; this interaction allows efficient MCP transport to the host nucleus. Interacts with capsid vertex component 2/CVC2. Interacts with the small capsomere-interacting protein/SCP.

It localises to the virion. The protein resides in the host nucleus. Its function is as follows. Self-assembles to form an icosahedral capsid with a T=16 symmetry, about 200 nm in diameter, and consisting of 150 hexons and 12 pentons (total of 162 capsomers). Hexons form the edges and faces of the capsid and are each composed of six MCP molecules. In contrast, one penton is found at each of the 12 vertices. Eleven of the pentons are MCP pentamers, while the last vertex is occupied by the portal complex. The capsid is surrounded by a layer of proteinaceous material designated the tegument which, in turn, is enclosed in an envelope of host cell-derived lipids containing virus-encoded glycoproteins. In Homo sapiens (Human), this protein is Major capsid protein.